The following is a 106-amino-acid chain: Iron-sulfur cluster assembly protein CyaY (106 aa).

Belongs to the frataxin family.

Its function is as follows. Involved in iron-sulfur (Fe-S) cluster assembly. May act as a regulator of Fe-S biogenesis. This Klebsiella pneumoniae subsp. pneumoniae (strain ATCC 700721 / MGH 78578) protein is Iron-sulfur cluster assembly protein CyaY.